A 366-amino-acid chain; its full sequence is Ribosomal RNA large subunit methyltransferase M (366 aa).

S-adenosyl-L-methionine-binding positions include Ser-188, 221–224, Asp-240, Asp-260, and Asp-277; that span reads CPGG. Lys-306 acts as the Proton acceptor in catalysis.

This sequence belongs to the class I-like SAM-binding methyltransferase superfamily. RNA methyltransferase RlmE family. RlmM subfamily. Monomer.

The protein localises to the cytoplasm. It carries out the reaction cytidine(2498) in 23S rRNA + S-adenosyl-L-methionine = 2'-O-methylcytidine(2498) in 23S rRNA + S-adenosyl-L-homocysteine + H(+). Its function is as follows. Catalyzes the 2'-O-methylation at nucleotide C2498 in 23S rRNA. In Photorhabdus sp. (strain Az29), this protein is Ribosomal RNA large subunit methyltransferase M.